The sequence spans 573 residues: DNA ligase (573 aa).

E250 contributes to the ATP binding site. The N6-AMP-lysine intermediate role is filled by K252. R257, R272, E301, F342, R432, and K438 together coordinate ATP.

The protein belongs to the ATP-dependent DNA ligase family. The cofactor is Mg(2+).

The enzyme catalyses ATP + (deoxyribonucleotide)n-3'-hydroxyl + 5'-phospho-(deoxyribonucleotide)m = (deoxyribonucleotide)n+m + AMP + diphosphate.. Functionally, DNA ligase that seals nicks in double-stranded DNA during DNA replication, DNA recombination and DNA repair. The sequence is that of DNA ligase from Methanococcus maripaludis (strain DSM 14266 / JCM 13030 / NBRC 101832 / S2 / LL).